The sequence spans 168 residues: Small ribosomal subunit protein uS9 (168 aa).

Residues 1-29 show a composition bias toward low complexity; sequence MAQNEELTAEAVEAEETLTSYTSESTSAE. Positions 1–36 are disordered; sequence MAQNEELTAEAVEAEETLTSYTSESTSAEDAPKKER.

This sequence belongs to the universal ribosomal protein uS9 family.

This chain is Small ribosomal subunit protein uS9, found in Paenarthrobacter aurescens (strain TC1).